A 37-amino-acid chain; its full sequence is Antifungal protein S (37 aa).

The protein belongs to the thaumatin family.

Has antifungal activity. Inhibits the growth of Trichoderma viridae and Candida albicans. The polypeptide is Antifungal protein S (Hordeum vulgare (Barley)).